The following is a 307-amino-acid chain: UDP-3-O-acyl-N-acetylglucosamine deacetylase (307 aa).

Positions 78, 241, and 245 each coordinate Zn(2+). Residue H268 is the Proton donor of the active site.

The protein belongs to the LpxC family. It depends on Zn(2+) as a cofactor.

It catalyses the reaction a UDP-3-O-[(3R)-3-hydroxyacyl]-N-acetyl-alpha-D-glucosamine + H2O = a UDP-3-O-[(3R)-3-hydroxyacyl]-alpha-D-glucosamine + acetate. Its pathway is glycolipid biosynthesis; lipid IV(A) biosynthesis; lipid IV(A) from (3R)-3-hydroxytetradecanoyl-[acyl-carrier-protein] and UDP-N-acetyl-alpha-D-glucosamine: step 2/6. Its function is as follows. Catalyzes the hydrolysis of UDP-3-O-myristoyl-N-acetylglucosamine to form UDP-3-O-myristoylglucosamine and acetate, the committed step in lipid A biosynthesis. This is UDP-3-O-acyl-N-acetylglucosamine deacetylase from Delftia acidovorans (strain DSM 14801 / SPH-1).